Reading from the N-terminus, the 177-residue chain is R-phycoerythrin beta chain (177 aa).

Phycourobilin contacts are provided by Cys-50 and Cys-61. An N4-methylasparagine modification is found at Asn-72. The (2R,3E)-phycoerythrobilin site is built by Cys-82 and Cys-158.

The protein belongs to the phycobiliprotein family. Heterodimer of an alpha and a beta chain. Contains two covalently linked phycoerythrobilin chromophores and one covalently linked phycourobilin chromophore.

The protein resides in the plastid. The protein localises to the chloroplast thylakoid membrane. In terms of biological role, light-harvesting photosynthetic bile pigment-protein from the phycobiliprotein complex. The protein is R-phycoerythrin beta chain (cpeB) of Lophosiphonia boldii (Red alga).